A 343-amino-acid polypeptide reads, in one-letter code: MLVVQMPFSFPMAHFILFVFTVSTIFHVQQRLAKIQAMWELPVQIPVLASTSKALGHSQLRGMWTINAIGRLGNQMGEYATLYALAKMNGRPAFIPAQMHNTLAPIFRITLPVLNSAMASRIPWHNYHLNDWMEEEYRHIPGEYVRLTGYPCSWTFYHHLRHEILQEFTLHDHVREEAQKFLRGLQVNGSRPGTFVGVHVRRGDYVHVMPKVWKGVVADRRYLQQALDWFRARYSSPIFVVTSNGMAWCRENIDTSHGDVVFAGDGIEGSPAKDFALLTQCNHTIMTIGTFGIWAAYLTGGDTIYLANYTLPDSPFLKIFKPEAAFLPEWTGIAADLSPLLKH.

Residues 1-14 (MLVVQMPFSFPMAH) lie on the Cytoplasmic side of the membrane. The chain crosses the membrane as a helical; Signal-anchor for type II membrane protein span at residues 15–28 (FILFVFTVSTIFHV). The Lumenal portion of the chain corresponds to 29–343 (QQRLAKIQAM…AADLSPLLKH (315 aa)). N-linked (GlcNAc...) asparagine glycans are attached at residues N188, N282, and N308.

It belongs to the glycosyltransferase 11 family.

It localises to the golgi apparatus. Its subcellular location is the golgi stack membrane. It carries out the reaction a beta-D-galactosyl-(1-&gt;3)-N-acetyl-beta-D-glucosaminyl derivative + GDP-beta-L-fucose = an alpha-L-Fuc-(1-&gt;2)-beta-D-Gal-(1-&gt;3)-beta-D-GlcNAc derivative + GDP + H(+). The enzyme catalyses a beta-D-galactosyl-(1-&gt;4)-N-acetyl-beta-D-glucosaminyl derivative + GDP-beta-L-fucose = an alpha-L-Fuc-(1-&gt;2)-beta-D-Gal-(1-&gt;4)-beta-D-GlcNAc derivative + GDP + H(+). The catalysed reaction is a neolactoside nLc4Cer + GDP-beta-L-fucose = a neolactoside IV(2)-alpha-Fuc-nLc4Cer + GDP + H(+). It catalyses the reaction a neolactoside nLc4Cer(d18:1(4E)) + GDP-beta-L-fucose = a neolactoside IV(2)-alpha-Fuc-nLc4Cer(d18:1(4E)) + GDP + H(+). It carries out the reaction a ganglioside GM1 + GDP-beta-L-fucose = a ganglioside Fuc-GM1 + GDP + H(+). The enzyme catalyses a ganglioside GA1 + GDP-beta-L-fucose = a ganglioside Fuc-GA1 + GDP + H(+). The catalysed reaction is Lc4Cer + GDP-beta-L-fucose = alpha-L-fucosyl-(1-&gt;2)-beta-D-galactosyl-(1-&gt;3)-N-acetyl-beta-D-glucosaminyl-(1-&gt;3)-beta-D-galactosyl-(1-&gt;4)-beta-D-glucosyl-(1&lt;-&gt;1')-ceramide + GDP + H(+). It catalyses the reaction a beta-D-Gal-(1-&gt;3)-beta-D-GlcNAc-(1-&gt;3)-beta-D-Gal-(1-&gt;4)-beta-D-Glc-(1&lt;-&gt;1')-Cer(d18:1(4E)) + GDP-beta-L-fucose = alpha-L-fucosyl-(1-&gt;2)- beta-D-galactosyl-(1-&gt;3)-N-acetyl-beta-D-glucosaminyl-(1-&gt;3)-beta-D-galactosyl-(1-&gt;4)-beta-D-glucosyl-(1&lt;-&gt;1')-N-acylsphing-4-enine + GDP + H(+). It carries out the reaction a ganglioside GD1b + GDP-beta-L-fucose = a ganglioside Fuc-GD1b + GDP + H(+). The enzyme catalyses a ganglioside GM1 (d18:1(4E)) + GDP-beta-L-fucose = a ganglioside Fuc-GM1 (d18:1(4E)) + GDP + H(+). The catalysed reaction is a globoside GalGb4Cer (d18:1(4E)) + GDP-beta-L-fucose = a globoside Globo-H (d18:1(4E)) + GDP + H(+). It catalyses the reaction a lactoside III(4)-a-Fuc-Lc4Cer + GDP-beta-L-fucose = a lactoside IV(2),III(4)-a-[Fuc]2-Lc4Cer + GDP + H(+). It carries out the reaction beta-D-galactosyl-(1-&gt;3)-N-acetyl-D-galactosamine + GDP-beta-L-fucose = alpha-L-fucosyl-(1-&gt;2)-beta-D-galactosyl-(1-&gt;3)-N-acetyl-D-galactosamine + GDP + H(+). The protein operates within protein modification; protein glycosylation. Its function is as follows. Catalyzes the transfer of L-fucose, from a guanosine diphosphate-beta-L-fucose, to the terminal galactose on both O- and N-linked glycans chains of cell surface glycoproteins and glycolipids and the resulting epitope regulates several processes such as cell-cell interaction including host-microbe interaction, cell surface expression and cell proliferation. Preferentially fucosylates gangliosides GA1 and GM1 in the antrum, cecum and colon and in the female reproductive organs. Fucosylated host glycoproteins or glycolipids mediate interaction with intestinal microbiota influencing its composition. Creates a soluble precursor oligosaccharide FuC-alpha ((1,2)Galbeta-) called the H antigen which is an essential substrate for the final step in the soluble ABO blood group antigen synthesis pathway. The chain is Galactoside alpha-(1,2)-fucosyltransferase 2 from Hylobates lar (Lar gibbon).